A 322-amino-acid chain; its full sequence is GTP 3',8-cyclase (322 aa).

A Radical SAM core domain is found at 5–233 (KYGRVVDYLR…NAPASIYRLD (229 aa)). Position 14 (Arg14) interacts with GTP. [4Fe-4S] cluster contacts are provided by Cys21 and Cys25. Tyr27 is an S-adenosyl-L-methionine binding site. A [4Fe-4S] cluster-binding site is contributed by Cys28. Arg64 lines the GTP pocket. Residue Gly68 participates in S-adenosyl-L-methionine binding. Residue Thr95 participates in GTP binding. Position 119 (Ser119) interacts with S-adenosyl-L-methionine. Lys155 serves as a coordination point for GTP. S-adenosyl-L-methionine is bound at residue Met189. [4Fe-4S] cluster is bound by residues Cys249 and Cys252. 254–256 (RIR) serves as a coordination point for GTP. Cys266 is a [4Fe-4S] cluster binding site.

This sequence belongs to the radical SAM superfamily. MoaA family. As to quaternary structure, monomer and homodimer. [4Fe-4S] cluster serves as cofactor.

The enzyme catalyses GTP + AH2 + S-adenosyl-L-methionine = (8S)-3',8-cyclo-7,8-dihydroguanosine 5'-triphosphate + 5'-deoxyadenosine + L-methionine + A + H(+). Its pathway is cofactor biosynthesis; molybdopterin biosynthesis. Functionally, catalyzes the cyclization of GTP to (8S)-3',8-cyclo-7,8-dihydroguanosine 5'-triphosphate. This is GTP 3',8-cyclase from Campylobacter curvus (strain 525.92).